A 117-amino-acid chain; its full sequence is Immunoglobulin heavy variable 3-48 (117 aa).

Residues 1-19 (MELGLCWVFLVAILEGVQC) form the signal peptide. The interval 20 to 44 (EVQLVESGGGLVQPGGSLRLSCAAS) is framework-1. The Ig-like domain maps to 20–117 (EVQLVESGGG…EDTAVYYCAR (98 aa)). The cysteines at positions 41 and 115 are disulfide-linked. Residues 45 to 52 (GFTFSSYE) form a complementarity-determining-1 region. Positions 53–69 (MNWVRQAPGKGLEWVSY) are framework-2. The complementarity-determining-2 stretch occupies residues 70 to 77 (ISSSGSTI). The tract at residues 78–115 (YYADSVKGRFTISRDNAKNSLYLQMNSLRAEDTAVYYC) is framework-3. The tract at residues 116–117 (AR) is complementarity-determining-3.

In terms of assembly, immunoglobulins are composed of two identical heavy chains and two identical light chains; disulfide-linked. The N-terminus is blocked.

It localises to the secreted. The protein resides in the cell membrane. In terms of biological role, v region of the variable domain of immunoglobulin heavy chains that participates in the antigen recognition. Immunoglobulins, also known as antibodies, are membrane-bound or secreted glycoproteins produced by B lymphocytes. In the recognition phase of humoral immunity, the membrane-bound immunoglobulins serve as receptors which, upon binding of a specific antigen, trigger the clonal expansion and differentiation of B lymphocytes into immunoglobulins-secreting plasma cells. Secreted immunoglobulins mediate the effector phase of humoral immunity, which results in the elimination of bound antigens. The antigen binding site is formed by the variable domain of one heavy chain, together with that of its associated light chain. Thus, each immunoglobulin has two antigen binding sites with remarkable affinity for a particular antigen. The variable domains are assembled by a process called V-(D)-J rearrangement and can then be subjected to somatic hypermutations which, after exposure to antigen and selection, allow affinity maturation for a particular antigen. This Homo sapiens (Human) protein is Immunoglobulin heavy variable 3-48.